A 447-amino-acid chain; its full sequence is Chromosomal replication initiator protein DnaA (447 aa).

The domain I, interacts with DnaA modulators stretch occupies residues 1–66 (MSNRIISILK…SKAIKEAYGK (66 aa)). The tract at residues 66–102 (KNLDYEIVYETTEPEAFNKSNESYKGPLVKKKPLLIS) is domain II. Positions 103–319 (NLNANYTFEN…GVIIKLIVQS (217 aa)) are domain III, AAA+ region. Residues glycine 146, glycine 148, lysine 149, and threonine 150 each contribute to the ATP site. Positions 320-447 (SINKERIGAA…NTMATSSAAG (128 aa)) are domain IV, binds dsDNA.

It belongs to the DnaA family. In terms of assembly, oligomerizes as a right-handed, spiral filament on DNA at oriC.

It localises to the cytoplasm. In terms of biological role, plays an essential role in the initiation and regulation of chromosomal replication. ATP-DnaA binds to the origin of replication (oriC) to initiate formation of the DNA replication initiation complex once per cell cycle. Binds the DnaA box (a 9 base pair repeat at the origin) and separates the double-stranded (ds)DNA. Forms a right-handed helical filament on oriC DNA; dsDNA binds to the exterior of the filament while single-stranded (ss)DNA is stabiized in the filament's interior. The ATP-DnaA-oriC complex binds and stabilizes one strand of the AT-rich DNA unwinding element (DUE), permitting loading of DNA polymerase. After initiation quickly degrades to an ADP-DnaA complex that is not apt for DNA replication. Binds acidic phospholipids. This Kosmotoga olearia (strain ATCC BAA-1733 / DSM 21960 / TBF 19.5.1) protein is Chromosomal replication initiator protein DnaA.